The sequence spans 86 residues: Putative membrane protein insertion efficiency factor (86 aa).

The disordered stretch occupies residues 64–86 (GVDPVPKKSSSKTSTTACGCGHS). Residues 70–79 (KKSSSKTSTT) are compositionally biased toward low complexity.

Belongs to the UPF0161 family.

The protein resides in the cell inner membrane. Could be involved in insertion of integral membrane proteins into the membrane. This chain is Putative membrane protein insertion efficiency factor, found in Janthinobacterium sp. (strain Marseille) (Minibacterium massiliensis).